Reading from the N-terminus, the 532-residue chain is Vesicular acetylcholine transporter (532 aa).

Residues 1-33 (MESAEPAGQARAAATKLSEAVGAALQEPRRQRR) lie on the Cytoplasmic side of the membrane. A helical transmembrane segment spans residues 34–54 (LVLVIVCVALLLDNMLYMVIV). Over 55–125 (PIVPDYIAHM…PTESEDVKIG (71 aa)) the chain is Lumenal, vesicle. Residues asparagine 89 and asparagine 96 are each glycosylated (N-linked (GlcNAc...) asparagine). The helical transmembrane segment at 126 to 146 (VLFASKAILQLLVNPLSGPFI) threads the bilayer. At 147-152 (DRMSYD) the chain is on the cytoplasmic side. A helical membrane pass occupies residues 153 to 173 (VPLLIGLGVMFASTVLFAFAE). At 174 to 182 (DYATLFAAR) the chain is on the lumenal, vesicle side. The helical transmembrane segment at 183-203 (SLQGLGSAFADTSGIAMIADK) threads the bilayer. At 204 to 213 (YPEEPERSRA) the chain is on the cytoplasmic side. Residues 214–234 (LGVALAFISFGSLVAPPFGGI) traverse the membrane as a helical segment. Topologically, residues 235–242 (LYEFAGKR) are lumenal, vesicle. The helical transmembrane segment at 243–263 (VPFLVLAAVSLFDALLLLAVA) threads the bilayer. The Cytoplasmic portion of the chain corresponds to 264-289 (KPFSAAARARANLPVGTPIHRLMLDP). The chain crosses the membrane as a helical span at residues 290–310 (YIAVVAGALTTCNIPLAFLEP). The Lumenal, vesicle segment spans residues 311-325 (TIATWMKHTMAASEW). The chain crosses the membrane as a helical span at residues 326-346 (EMGMAWLPAFVPHVLGVYLTV). Topologically, residues 347-356 (RLAARYPHLQ) are cytoplasmic. Residues 357–377 (WLYGALGLAVIGASSCIVPAC) traverse the membrane as a helical segment. At 378–388 (RSFAPLVVSLC) the chain is on the lumenal, vesicle side. Residues 389–409 (GLCFGIALVDTALLPTLAFLV) traverse the membrane as a helical segment. Residues 410 to 422 (DVRHVSVYGSVYA) are Cytoplasmic-facing. The chain crosses the membrane as a helical span at residues 423 to 443 (IADISYSVAYALGPIVAGHIV). The Lumenal, vesicle portion of the chain corresponds to 444 to 447 (HSLG). Residues 448–468 (FEQLSLGMGLANLLYAPVLLL) traverse the membrane as a helical segment. The Cytoplasmic segment spans residues 469–532 (LRNVGLLTRS…DDYNYYYTRS (64 aa)). A mediates interaction with SEC14L1 region spans residues 471 to 532 (NVGLLTRSRS…DDYNYYYTRS (62 aa)). The disordered stretch occupies residues 502-523 (RPVSGQDGEPRSPPGPFDACED).

It belongs to the major facilitator superfamily. Vesicular transporter family. In terms of assembly, interacts with SEC14L1. In terms of tissue distribution, peripheral and central cholinergic nervous systems.

Its subcellular location is the cytoplasmic vesicle. The protein localises to the secretory vesicle. The protein resides in the synaptic vesicle membrane. The enzyme catalyses acetylcholine(out) + 2 H(+)(in) = acetylcholine(in) + 2 H(+)(out). It catalyses the reaction choline(in) + 2 H(+)(out) = choline(out) + 2 H(+)(in). The catalysed reaction is serotonin(in) + 2 H(+)(out) = serotonin(out) + 2 H(+)(in). With respect to regulation, potently inhibited by L-vesamicol, reserpine and tetrabenazine. In terms of biological role, electrogenic antiporter that exchanges one cholinergic neurotransmitter, acetylcholine or choline, with two intravesicular protons across the membrane of synaptic vesicles. Uses the electrochemical proton gradient established by the V-type proton-pump ATPase to store neurotransmitters inside the vesicles prior to their release via exocytosis. Determines cholinergic vesicular quantal size at presynaptic nerve terminals in developing neuro-muscular junctions with an impact on motor neuron differentiation and innervation pattern. Part of forebrain cholinergic system, regulates hippocampal synapse transmissions that underlie spatial memory formation. Can transport serotonin. This Homo sapiens (Human) protein is Vesicular acetylcholine transporter (SLC18A3).